The following is a 126-amino-acid chain: Large-conductance mechanosensitive channel (126 aa).

2 helical membrane-spanning segments follow: residues 8 to 28 (FAMR…AAFT) and 70 to 90 (IQQI…VKVI).

The protein belongs to the MscL family. In terms of assembly, homopentamer.

The protein localises to the cell membrane. Channel that opens in response to stretch forces in the membrane lipid bilayer. May participate in the regulation of osmotic pressure changes within the cell. This Exiguobacterium sp. (strain ATCC BAA-1283 / AT1b) protein is Large-conductance mechanosensitive channel.